The primary structure comprises 135 residues: Small ribosomal subunit protein uS11 (135 aa).

The span at 1 to 11 (MPPKARAGAAV) shows a compositional bias: low complexity. Residues 1 to 22 (MPPKARAGAAVKKVRRKERKNV) are disordered.

The protein belongs to the universal ribosomal protein uS11 family. In terms of assembly, part of the 30S ribosomal subunit. Interacts with proteins S7 and S18. Binds to IF-3.

Functionally, located on the platform of the 30S subunit, it bridges several disparate RNA helices of the 16S rRNA. Forms part of the Shine-Dalgarno cleft in the 70S ribosome. The protein is Small ribosomal subunit protein uS11 of Salinispora tropica (strain ATCC BAA-916 / DSM 44818 / JCM 13857 / NBRC 105044 / CNB-440).